The primary structure comprises 208 residues: Putative 3-methyladenine DNA glycosylase (208 aa).

It belongs to the DNA glycosylase MPG family.

The chain is Putative 3-methyladenine DNA glycosylase from Lactobacillus johnsonii (strain CNCM I-12250 / La1 / NCC 533).